The chain runs to 286 residues: 2-hydroxy-6-oxo-6-phenylhexa-2,4-dienoate hydrolase (286 aa).

Residues 42–43 (GG), Asn51, Asn111, Thr180, and Arg190 each bind substrate. His265 serves as the catalytic Proton acceptor. Residue Trp266 coordinates substrate.

The protein belongs to the AB hydrolase superfamily. BphD family. Homodimer.

It carries out the reaction 2,6-dioxo-6-phenylhexa-3-enoate + H2O = 2-oxopent-4-enoate + benzoate + H(+). It participates in xenobiotic degradation; biphenyl degradation; 2-hydroxy-2,4-pentadienoate and benzoate from biphenyl: step 4/4. Its function is as follows. Catalyzes an unusual C-C bond hydrolysis of 2-hydroxy-6-oxo-6-phenylhexa-2,4-dienoic acid (HOPDA) to produce benzoic acid and 2-hydroxy-2,4-pentadienoic acid (HPD). This chain is 2-hydroxy-6-oxo-6-phenylhexa-2,4-dienoate hydrolase, found in Comamonas testosteroni (Pseudomonas testosteroni).